The chain runs to 162 residues: MTQQTVLDKIRSLVLPVLEEKGRELVDVEYRREGQGWILRLYIDQPGGVTLDACAEVSREVGVLLEVEDPIDTAYNLEVSSPGLDRPLTKLEDYERFAGRLAKVKSRVSIDVDGKGRGRKTFVGVLAGLSEGKVVLELKDKNGFRMEIPFEDIEKANLEIEF.

It belongs to the RimP family.

Its subcellular location is the cytoplasm. Its function is as follows. Required for maturation of 30S ribosomal subunits. This is Ribosome maturation factor RimP from Syntrophotalea carbinolica (strain DSM 2380 / NBRC 103641 / GraBd1) (Pelobacter carbinolicus).